A 251-amino-acid polypeptide reads, in one-letter code: Probable transcriptional regulatory protein Cpar_0525 (251 aa).

It belongs to the TACO1 family.

The protein resides in the cytoplasm. The chain is Probable transcriptional regulatory protein Cpar_0525 from Chlorobaculum parvum (strain DSM 263 / NCIMB 8327) (Chlorobium vibrioforme subsp. thiosulfatophilum).